Consider the following 256-residue polypeptide: DNA repair protein RecO (256 aa).

This sequence belongs to the RecO family.

Involved in DNA repair and RecF pathway recombination. The sequence is that of DNA repair protein RecO from Streptococcus pneumoniae (strain Hungary19A-6).